The following is an 825-amino-acid chain: Translation initiation factor IF-2 (825 aa).

Basic and acidic residues-rich tracts occupy residues 1-19 (MTKKQENETSKELGMDNKK), 35-45 (RKGEKKTEGKR), 70-98 (LLKDLKQKQRADEARLDQESKAAKQEYKK), and 113-122 (KKVESVEKPA). Residues 1-239 (MTKKQENETS…TQRKDRPLPE (239 aa)) form a disordered region. Over residues 158–169 (PSSSRRPSSRPS) the composition is skewed to low complexity. Basic residues predominate over residues 181–191 (GRRRKSGKPGR). Positions 194–208 (QNSYADQGRGANSNR) are enriched in polar residues. The segment covering 211 to 220 (QRKRKNKKHQ) has biased composition (basic residues). In terms of domain architecture, tr-type G spans 326-495 (VRPPVVTIMG…ILEADMLELK (170 aa)). Residues 335-342 (GHVDHGKT) are G1. GTP is bound at residue 335 to 342 (GHVDHGKT). The tract at residues 360 to 364 (GITQN) is G2. The segment at 381–384 (DTPG) is G3. GTP-binding positions include 381–385 (DTPGH) and 435–438 (NKMD). The interval 435–438 (NKMD) is G4. The interval 471-473 (SAK) is G5.

This sequence belongs to the TRAFAC class translation factor GTPase superfamily. Classic translation factor GTPase family. IF-2 subfamily.

It localises to the cytoplasm. In terms of biological role, one of the essential components for the initiation of protein synthesis. Protects formylmethionyl-tRNA from spontaneous hydrolysis and promotes its binding to the 30S ribosomal subunits. Also involved in the hydrolysis of GTP during the formation of the 70S ribosomal complex. The protein is Translation initiation factor IF-2 of Lactobacillus delbrueckii subsp. bulgaricus (strain ATCC 11842 / DSM 20081 / BCRC 10696 / JCM 1002 / NBRC 13953 / NCIMB 11778 / NCTC 12712 / WDCM 00102 / Lb 14).